Here is a 381-residue protein sequence, read N- to C-terminus: DNA dC-&gt;dU-editing enzyme APOBEC-3G (381 aa).

The tract at residues 1-62 is essential for cytoplasmic localization; sequence MKPQTRNTVV…ANIFQGQVSF (62 aa). CMP/dCMP-type deaminase domains are found at residues 29–143 and 211–325; these read HRNT…SQTG and GQHQ…LRRL. T32 is modified (phosphothreonine; by PKA). Zn(2+) is bound by residues H67, C98, and C101. A necessary for homooligomerization region spans residues 206–333; that stretch reads DPSVLGQHQS…RLDRAGTPIS (128 aa). Residues 210–212 form an interaction with DNA region; it reads LGQ. Residue H254 coordinates Zn(2+). Residue E256 is the Proton donor of the active site. Residues C285 and C288 each coordinate Zn(2+). The segment at 310–317 is interaction with DNA; the sequence is RIYDYQRG.

It belongs to the cytidine and deoxycytidylate deaminase family. In terms of assembly, homodimer. Homooligomer. Can bind RNA to form ribonucleoprotein complexes of high-molecular-mass (HMM) or low-molecular-mass (LMM). HMM is inactive and heterogeneous in protein composition because of binding nonselectively to cellular RNAs, which in turn are associated with variety of cellular proteins. The LMM form which is enzymatically active has few or no RNAs associated. Its ability to form homooligomer is distinct from its ability to assemble into HMM. Interacts with APOBEC3B, APOBEC3F, MOV10, AGO2, EIF4E, EIF4ENIF1, DCP2 and DDX6 in an RNA-dependent manner. Interacts with AGO1, AGO3 and PKA/PRKACA. Zn(2+) is required as a cofactor.

It is found in the cytoplasm. The protein resides in the nucleus. Its subcellular location is the P-body. The enzyme catalyses a 2'-deoxycytidine in single-stranded DNA + H2O + H(+) = a 2'-deoxyuridine in single-stranded DNA + NH4(+). DNA deaminase (cytidine deaminase) which acts as an inhibitor of retrovirus replication and retrotransposon mobility. After the penetration of retroviral nucleocapsids into target cells of infection and the initiation of reverse transcription, it can induce the conversion of cytosine to uracil in the minus-sense single-strand viral DNA, leading to G-to-A hypermutations in the subsequent plus-strand viral DNA. The resultant detrimental levels of mutations in the proviral genome, along with a deamination-independent mechanism that works prior to the proviral integration, together exert efficient antiretroviral effects in infected target cells. Selectively targets single-stranded DNA and does not deaminate double-stranded DNA or single- or double-stranded RNA. This chain is DNA dC-&gt;dU-editing enzyme APOBEC-3G (APOBEC3G), found in Lagothrix lagotricha (Brown woolly monkey).